The following is a 331-amino-acid chain: Homeobox protein DBX1 (331 aa).

Disordered regions lie at residues 56–94 (RAVP…ISSN) and 232–331 (KERE…ITVS). The segment at residues 173 to 232 (GMLRRAVFSDVQRKALEKMFQKQKYISKPDRKKLAGKLGLKDSQVKIWFQNRRMKWRNSK) is a DNA-binding region (homeobox). Over residues 256-266 (DLSDVSKKSSG) the composition is skewed to basic and acidic residues. Residues 299-314 (PSSPFNSSSASKPSDF) are compositionally biased toward low complexity. Acidic residues predominate over residues 315 to 331 (SDSEEEGGEQEEEITVS).

This sequence belongs to the H2.0 homeobox family.

Its subcellular location is the nucleus. May function within the midpoint progenitor population to inhibit neuronal differentiation, possibly through modulating the function of Xash3. This is Homeobox protein DBX1 (dbx1) from Xenopus laevis (African clawed frog).